A 387-amino-acid chain; its full sequence is 3-ketoacyl-CoA thiolase (387 aa).

Cys-91 serves as the catalytic Acyl-thioester intermediate. Active-site proton acceptor residues include His-343 and Cys-373.

Belongs to the thiolase-like superfamily. Thiolase family. In terms of assembly, heterotetramer of two alpha chains (FadB) and two beta chains (FadA).

It localises to the cytoplasm. It carries out the reaction an acyl-CoA + acetyl-CoA = a 3-oxoacyl-CoA + CoA. It participates in lipid metabolism; fatty acid beta-oxidation. Its function is as follows. Catalyzes the final step of fatty acid oxidation in which acetyl-CoA is released and the CoA ester of a fatty acid two carbons shorter is formed. This chain is 3-ketoacyl-CoA thiolase, found in Shewanella baltica (strain OS185).